The primary structure comprises 319 residues: Taste receptor type 2 member 30 (319 aa).

A topological domain (extracellular) is located at residue Met1. The chain crosses the membrane as a helical span at residues 2–22 (ITFLPIIFSILIVVIFVIGNF). Over 23-46 (ANGFIALVNSIEWVKRQKISFVDQ) the chain is Cytoplasmic. Residues 47–67 (ILTALAVSRVGLLWVLLLHWY) traverse the membrane as a helical segment. Over 68–86 (ATQLNPAFYSVEVRITVYN) the chain is Extracellular. A helical membrane pass occupies residues 87 to 107 (VWAVTNHFSSWLATSLSMFYL). The Cytoplasmic segment spans residues 108-126 (LKIANFSNLIFLRIKRRVK). Residues 127–147 (SVVLVILLGPLLFLVCHLFVI) form a helical membrane-spanning segment. Topologically, residues 148–178 (NMDETIWTKEYEGNMTWKIKLRSAMYHSNMT) are extracellular. N-linked (GlcNAc...) asparagine glycosylation is found at Asn161 and Asn176. Residues 179 to 199 (LTMLANFVPLTLTLISFLLLI) form a helical membrane-spanning segment. The Cytoplasmic segment spans residues 200–229 (CSLCKHLKKMQLHGKGSQDPSTKVHIKALQ). The chain crosses the membrane as a helical span at residues 230 to 250 (TVTSFLLLCAIYFLSMIISVC). The Extracellular portion of the chain corresponds to 251-259 (NLGRLEKQP). A helical membrane pass occupies residues 260 to 280 (VFMFCQAIIFSYPSTHPFILI). Residues 281-319 (LGNKKLKQIFLSVLWHVRYWVKDRSLRLHRFTRAALCKG) are Cytoplasmic-facing.

Belongs to the G-protein coupled receptor T2R family.

The protein resides in the membrane. In terms of biological role, receptor that may play a role in the perception of bitterness and is gustducin-linked. May play a role in sensing the chemical composition of the gastrointestinal content. The activity of this receptor may stimulate alpha gustducin, mediate PLC-beta-2 activation and lead to the gating of TRPM5. This chain is Taste receptor type 2 member 30 (TAS2R30), found in Pan troglodytes (Chimpanzee).